A 627-amino-acid polypeptide reads, in one-letter code: uncharacterized protein (627 aa).

Disordered stretches follow at residues 57–82 (EDAM…QGED), 96–121 (PEAQ…APPG), 160–184 (GCSH…DAAY), 198–232 (AQSQ…CPSG), 247–277 (SHDA…RGAP), 335–358 (RQAG…EAAY), and 449–579 (VFDV…PPLS). Positions 169-183 (SSSDQAADAPAGDAA) are enriched in low complexity. Residues 336–357 (QAGAEPAQAPATAPAPEGTEAA) are compositionally biased toward low complexity. Residues 450-464 (FDVKEQGAHADRDAA) are compositionally biased toward basic and acidic residues.

This is an uncharacterized protein from Treponema pallidum (strain Nichols).